Here is a 347-residue protein sequence, read N- to C-terminus: Biotin synthase (347 aa).

Residues 40–258 (AQVQVSTLLS…IAVARIAMPR (219 aa)) enclose the Radical SAM core domain. Residues cysteine 55, cysteine 59, and cysteine 62 each coordinate [4Fe-4S] cluster. Residues cysteine 99, cysteine 130, cysteine 190, and arginine 262 each contribute to the [2Fe-2S] cluster site.

The protein belongs to the radical SAM superfamily. Biotin synthase family. In terms of assembly, homodimer. [4Fe-4S] cluster serves as cofactor. It depends on [2Fe-2S] cluster as a cofactor.

It catalyses the reaction (4R,5S)-dethiobiotin + (sulfur carrier)-SH + 2 reduced [2Fe-2S]-[ferredoxin] + 2 S-adenosyl-L-methionine = (sulfur carrier)-H + biotin + 2 5'-deoxyadenosine + 2 L-methionine + 2 oxidized [2Fe-2S]-[ferredoxin]. Its pathway is cofactor biosynthesis; biotin biosynthesis; biotin from 7,8-diaminononanoate: step 2/2. Catalyzes the conversion of dethiobiotin (DTB) to biotin by the insertion of a sulfur atom into dethiobiotin via a radical-based mechanism. This Stenotrophomonas maltophilia (strain K279a) protein is Biotin synthase.